A 280-amino-acid polypeptide reads, in one-letter code: Aspartate/glutamate leucyltransferase (280 aa).

It belongs to the R-transferase family. Bpt subfamily.

The protein localises to the cytoplasm. It catalyses the reaction N-terminal L-glutamyl-[protein] + L-leucyl-tRNA(Leu) = N-terminal L-leucyl-L-glutamyl-[protein] + tRNA(Leu) + H(+). It carries out the reaction N-terminal L-aspartyl-[protein] + L-leucyl-tRNA(Leu) = N-terminal L-leucyl-L-aspartyl-[protein] + tRNA(Leu) + H(+). In terms of biological role, functions in the N-end rule pathway of protein degradation where it conjugates Leu from its aminoacyl-tRNA to the N-termini of proteins containing an N-terminal aspartate or glutamate. This is Aspartate/glutamate leucyltransferase from Cereibacter sphaeroides (strain ATCC 17023 / DSM 158 / JCM 6121 / CCUG 31486 / LMG 2827 / NBRC 12203 / NCIMB 8253 / ATH 2.4.1.) (Rhodobacter sphaeroides).